Here is a 309-residue protein sequence, read N- to C-terminus: tRNA dimethylallyltransferase (309 aa).

10-17 contacts ATP; sequence GPTAVGKT. 12–17 is a substrate binding site; it reads TAVGKT. The segment at 35 to 38 is interaction with substrate tRNA; sequence DSMQ.

Belongs to the IPP transferase family. As to quaternary structure, monomer. Mg(2+) serves as cofactor.

It carries out the reaction adenosine(37) in tRNA + dimethylallyl diphosphate = N(6)-dimethylallyladenosine(37) in tRNA + diphosphate. Its function is as follows. Catalyzes the transfer of a dimethylallyl group onto the adenine at position 37 in tRNAs that read codons beginning with uridine, leading to the formation of N6-(dimethylallyl)adenosine (i(6)A). This chain is tRNA dimethylallyltransferase, found in Clostridium beijerinckii (strain ATCC 51743 / NCIMB 8052) (Clostridium acetobutylicum).